Consider the following 168-residue polypeptide: Cilia- and flagella-associated protein HOATZ (168 aa).

Residues 142–168 (PKDKVPKSKEVLSESGLRDQEEVKALE) form a disordered region.

This sequence belongs to the HOATZ family. In terms of tissue distribution, specifically expressed in tissues with motile cilia and flagella, such as brain ependyma, lung, testis, and oviduct but not in whole brain, liver,kidney, spleen, and eyeball.

Its subcellular location is the cytoplasm. It localises to the cell projection. The protein localises to the cilium. Required for motile ciliogenesis and flagellar genesis by mediating the maturation of the glycolytic enzyme ENO4. The chain is Cilia- and flagella-associated protein HOATZ from Mus musculus (Mouse).